The sequence spans 875 residues: GATOR2 complex protein MIOS (875 aa).

WD repeat units lie at residues 61 to 100 (PYMK…NSKF), 111 to 155 (KHAR…TPDI), 182 to 221 (GQND…QKMF), 223 to 261 (NTKA…KPVL), 265 to 306 (EQPK…TPIG), and 395 to 437 (RLRA…KQYT). The C4-type zinc finger occupies 735–781 (VSCNFCGKSISYSCSAVPHQGRGFSQYGVSGSPTKSKVTSCPGCRKP). Zn(2+) is bound by residues cysteine 737 and cysteine 740. Phosphoserine occurs at positions 759 and 766. Positions 775, 778, 788, 827, 830, 832, 835, 838, 849, 854, and 858 each coordinate Zn(2+). The segment at 782-863 (LPRCALCLIN…CTCKCMQLDT (82 aa)) adopts an RING-type; atypical zinc-finger fold.

Belongs to the WD repeat mio family. In terms of assembly, component of the GATOR2 subcomplex, composed of MIOS, SEC13, SEH1L, WDR24 and WDR59. The GATOR2 complex interacts with CASTOR1 and CASTOR2; the interaction is negatively regulated by arginine. CASTOR1 and CASTOR2 convey leucine availability via direct interaction with MIOS. The GATOR2 complex interacts with SESN1, SESN2 and SESN3; the interaction is negatively regulated by amino acids. Interacts with SAR1A and SAR1B; the interaction is direct, disrupted by leucine and mediates the interaction of SAR1A or SAR1B with the GATOR2 complex to negatively regulate the TORC1 signaling upon leucine deprivation.

The protein localises to the lysosome membrane. The GATOR2 complex is negatively regulated by the upstream amino acid sensors CASTOR1 and SESN2, which sequester the GATOR2 complex in absence of amino acids. In the presence of abundant amino acids, GATOR2 is released from CASTOR1 and SESN2 and activated. As a component of the GATOR2 complex, functions as an activator of the amino acid-sensing branch of the mTORC1 signaling pathway. The GATOR2 complex indirectly activates mTORC1 through the inhibition of the GATOR1 subcomplex. GATOR2 probably acts as an E3 ubiquitin-protein ligase toward GATOR1. In the presence of abundant amino acids, the GATOR2 complex mediates ubiquitination of the NPRL2 core component of the GATOR1 complex, leading to GATOR1 inactivation. In the absence of amino acids, GATOR2 is inhibited, activating the GATOR1 complex. Within the GATOR2 complex, MIOS is required to prevent autoubiquitination of WDR24, the catalytic subunit of the complex. The GATOR2 complex is required for brain myelination. This Pongo abelii (Sumatran orangutan) protein is GATOR2 complex protein MIOS.